Consider the following 65-residue polypeptide: Putative beta-neurotoxin RjAa2 (65 aa).

Residues 1-64 enclose the LCN-type CS-alpha/beta domain; that stretch reads KEGYPMGRDG…VWDSSTNKCG (64 aa). Intrachain disulfides connect C11/C63, C15/C37, C22/C44, and C26/C46.

It belongs to the long (4 C-C) scorpion toxin superfamily. Sodium channel inhibitor family. Beta subfamily. In terms of tissue distribution, expressed by the venom gland.

It is found in the secreted. Beta toxins bind voltage-independently at site-4 of sodium channels (Nav) and shift the voltage of activation toward more negative potentials thereby affecting sodium channel activation and promoting spontaneous and repetitive firing. In Rhopalurus junceus (Caribbean blue scorpion), this protein is Putative beta-neurotoxin RjAa2.